We begin with the raw amino-acid sequence, 200 residues long: Inner membrane-spanning protein YciB (200 aa).

6 helical membrane passes run 1 to 21 (MPPL…FFAN), 37 to 57 (IGAP…IALA), 66 to 86 (LPIM…LTLW), 103 to 123 (LFGG…GYVF), 136 to 156 (KLTL…EIVW), and 167 to 187 (FKVW…MPLI).

The protein belongs to the YciB family.

The protein localises to the cell inner membrane. Plays a role in cell envelope biogenesis, maintenance of cell envelope integrity and membrane homeostasis. This Brucella suis biovar 1 (strain 1330) protein is Inner membrane-spanning protein YciB.